A 222-amino-acid chain; its full sequence is Putative N-acetylmannosamine-6-phosphate 2-epimerase (222 aa).

This sequence belongs to the NanE family.

The enzyme catalyses an N-acyl-D-glucosamine 6-phosphate = an N-acyl-D-mannosamine 6-phosphate. Its pathway is amino-sugar metabolism; N-acetylneuraminate degradation; D-fructose 6-phosphate from N-acetylneuraminate: step 3/5. Converts N-acetylmannosamine-6-phosphate (ManNAc-6-P) to N-acetylglucosamine-6-phosphate (GlcNAc-6-P). This is Putative N-acetylmannosamine-6-phosphate 2-epimerase from Staphylococcus aureus (strain MSSA476).